A 295-amino-acid polypeptide reads, in one-letter code: Protoheme IX farnesyltransferase (295 aa).

The next 9 helical transmembrane spans lie at 31-51, 54-74, 98-118, 121-141, 147-167, 173-193, 220-240, 245-265, and 273-293; these read GLVM…IGAA, VLTV…NCYL, FVAL…LSLA, GLTA…YTPM, TALF…WTSV, AGGL…FLAI, LWMA…VPLG, GYAI…ISGI, and ARTF…ALFL.

This sequence belongs to the UbiA prenyltransferase family. Protoheme IX farnesyltransferase subfamily.

It is found in the cell inner membrane. The catalysed reaction is heme b + (2E,6E)-farnesyl diphosphate + H2O = Fe(II)-heme o + diphosphate. It functions in the pathway porphyrin-containing compound metabolism; heme O biosynthesis; heme O from protoheme: step 1/1. Functionally, converts heme B (protoheme IX) to heme O by substitution of the vinyl group on carbon 2 of heme B porphyrin ring with a hydroxyethyl farnesyl side group. In Anaeromyxobacter dehalogenans (strain 2CP-C), this protein is Protoheme IX farnesyltransferase.